The chain runs to 591 residues: Chaperone protein DnaK (591 aa).

Thr-175 is subject to Phosphothreonine; by autocatalysis. Low complexity predominate over residues 568–577 (AQAAEFANKQ). The tract at residues 568-591 (AQAAEFANKQNESDPNNNSSEQNN) is disordered. Residues 580–591 (SDPNNNSSEQNN) show a composition bias toward polar residues.

Belongs to the heat shock protein 70 family.

Functionally, acts as a chaperone. The sequence is that of Chaperone protein DnaK from Mycoplasma mycoides subsp. mycoides SC (strain CCUG 32753 / NCTC 10114 / PG1).